Consider the following 200-residue polypeptide: GTP cyclohydrolase-2 (200 aa).

50–54 (RVHSE) provides a ligand contact to GTP. Zn(2+)-binding residues include Cys-55, Cys-66, and Cys-68. GTP is bound by residues Gln-71, 93-95 (EGR), and Thr-115. Asp-127 (proton acceptor) is an active-site residue. Catalysis depends on Arg-129, which acts as the Nucleophile. The GTP site is built by Thr-150 and Lys-155.

Belongs to the GTP cyclohydrolase II family. Requires Zn(2+) as cofactor.

The catalysed reaction is GTP + 4 H2O = 2,5-diamino-6-hydroxy-4-(5-phosphoribosylamino)-pyrimidine + formate + 2 phosphate + 3 H(+). The protein operates within cofactor biosynthesis; riboflavin biosynthesis; 5-amino-6-(D-ribitylamino)uracil from GTP: step 1/4. Catalyzes the conversion of GTP to 2,5-diamino-6-ribosylamino-4(3H)-pyrimidinone 5'-phosphate (DARP), formate and pyrophosphate. In Acinetobacter baumannii (strain SDF), this protein is GTP cyclohydrolase-2.